The sequence spans 257 residues: MGKAQIIQHQARRILSQSNRNCLFRRSYETLPAANQTLPSRIKTDINQKASIIPLLEQWRKQGYEVNPSHLRGLIKNLSDCKNFTTALEASKWMFKHSVFDNFPEDCAAQLHLVNTVLGLEEAEKMFKNIPEKMRDYSVLLSSYTKPVRTVDKAEATFKKMRELGFLLKPYLFNSMICLYGQLQRLDMVEKLLYKLKKNNMEVGSLKVNNVSRVYANINAMEKFKTWVSKEGIELERDTIVAMAKAYHRAGSIEKAR.

2 PPR repeats span residues Lys-133–Leu-168 and Lys-169–Val-203.

It belongs to the PPR family. P subfamily.

This chain is Putative pentatricopeptide repeat-containing protein At1g43010, found in Arabidopsis thaliana (Mouse-ear cress).